Consider the following 312-residue polypeptide: Malate dehydrogenase (312 aa).

NAD(+)-binding positions include glycine 7–glycine 13 and aspartate 34. Arginine 81 and arginine 87 together coordinate substrate. NAD(+) contacts are provided by residues asparagine 94 and isoleucine 117 to asparagine 119. Substrate-binding residues include asparagine 119 and arginine 153. The active-site Proton acceptor is histidine 177. Methionine 228 is a binding site for NAD(+).

The protein belongs to the LDH/MDH superfamily. MDH type 1 family. In terms of assembly, homodimer.

The enzyme catalyses (S)-malate + NAD(+) = oxaloacetate + NADH + H(+). In terms of biological role, catalyzes the reversible oxidation of malate to oxaloacetate. In Mannheimia succiniciproducens (strain KCTC 0769BP / MBEL55E), this protein is Malate dehydrogenase.